A 575-amino-acid chain; its full sequence is Proline--tRNA ligase, cytoplasmic (575 aa).

It belongs to the class-II aminoacyl-tRNA synthetase family.

It localises to the cytoplasm. It catalyses the reaction tRNA(Pro) + L-proline + ATP = L-prolyl-tRNA(Pro) + AMP + diphosphate. This Candida albicans (Yeast) protein is Proline--tRNA ligase, cytoplasmic (PRS).